We begin with the raw amino-acid sequence, 287 residues long: MSLVSMKEMLNEALRGKYAVGQFNINNLEWTQAILAAAEEEKSPVILGVSEGAARYMGGFKTVVNMVKGLMEDMNITVPVAIHLDHGSSFEKCKAAIDAGFTSVMIDASHHPFEENVRITSQVVEYAHARGVSVEAELGIVGGQEDDVVGEGVIYADPKECEELVKRTGIDCLAPALGSVHGPYKGEPKLGFAEMEKIRDLTGIPLVLHGGTGIPTEQIQRAISLGTSKINVNTENQIAFTKAVRELLAKDPNVYDPRKIIGPGRDAIKATVIGKMREFGSSGKAAQ.

Ser-50 contacts D-glyceraldehyde 3-phosphate. Asp-85 functions as the Proton donor in the catalytic mechanism. His-86, Asp-107, Glu-137, and His-181 together coordinate Zn(2+). Gly-182 is a binding site for dihydroxyacetone phosphate. Position 209 (His-209) interacts with Zn(2+). Dihydroxyacetone phosphate is bound by residues 210–212 (GGT) and 231–234 (NVNT). 2 positions are modified to phosphothreonine: Thr-212 and Thr-234.

The protein belongs to the class II fructose-bisphosphate aldolase family. It depends on Zn(2+) as a cofactor.

The enzyme catalyses beta-D-fructose 1,6-bisphosphate = D-glyceraldehyde 3-phosphate + dihydroxyacetone phosphate. It functions in the pathway carbohydrate degradation; glycolysis; D-glyceraldehyde 3-phosphate and glycerone phosphate from D-glucose: step 4/4. Functionally, catalyzes the aldol condensation of dihydroxyacetone phosphate (DHAP or glycerone-phosphate) with glyceraldehyde 3-phosphate (G3P) to form fructose 1,6-bisphosphate (FBP) in gluconeogenesis and the reverse reaction in glycolysis. The chain is Fructose-bisphosphate aldolase (fba) from Geobacillus stearothermophilus (Bacillus stearothermophilus).